A 93-amino-acid chain; its full sequence is MKSTTLFMVSCVLIFCVLSHVREVKSVETKAKRVKKVCEKAQVFEQNCGWDGNKTCIRGFNKIKEYPFHCECGIYDAPNSRRICKCKFPYSPC.

Residues 1 to 19 (MKSTTLFMVSCVLIFCVLS) form the signal peptide. 4 disulfide bridges follow: C38–C93, C48–C72, C56–C84, and C70–C86.

It belongs to the DEFL family. As to expression, flower buds.

It is found in the secreted. The sequence is that of Defensin-like protein 229 (SCRL27) from Arabidopsis thaliana (Mouse-ear cress).